The chain runs to 369 residues: Putative glutamate--cysteine ligase 2-1 (369 aa).

The protein belongs to the glutamate--cysteine ligase type 2 family. YbdK subfamily.

It catalyses the reaction L-cysteine + L-glutamate + ATP = gamma-L-glutamyl-L-cysteine + ADP + phosphate + H(+). Functionally, ATP-dependent carboxylate-amine ligase which exhibits weak glutamate--cysteine ligase activity. This is Putative glutamate--cysteine ligase 2-1 from Rhodococcus jostii (strain RHA1).